The chain runs to 20 residues: Cytochrome c oxidase subunit 6A1, mitochondrial (20 aa).

This sequence belongs to the cytochrome c oxidase subunit 6A family. In terms of assembly, component of the cytochrome c oxidase (complex IV, CIV), a multisubunit enzyme composed of 14 subunits. The complex is composed of a catalytic core of 3 subunits MT-CO1, MT-CO2 and MT-CO3, encoded in the mitochondrial DNA, and 11 supernumerary subunits COX4I, COX5A, COX5B, COX6A, COX6B, COX6C, COX7A, COX7B, COX7C, COX8 and NDUFA4, which are encoded in the nuclear genome. The complex exists as a monomer or a dimer and forms supercomplexes (SCs) in the inner mitochondrial membrane with NADH-ubiquinone oxidoreductase (complex I, CI) and ubiquinol-cytochrome c oxidoreductase (cytochrome b-c1 complex, complex III, CIII), resulting in different assemblies (supercomplex SCI(1)III(2)IV(1) and megacomplex MCI(2)III(2)IV(2)). Liver specific isoform.

The protein resides in the mitochondrion inner membrane. Its pathway is energy metabolism; oxidative phosphorylation. Component of the cytochrome c oxidase, the last enzyme in the mitochondrial electron transport chain which drives oxidative phosphorylation. The respiratory chain contains 3 multisubunit complexes succinate dehydrogenase (complex II, CII), ubiquinol-cytochrome c oxidoreductase (cytochrome b-c1 complex, complex III, CIII) and cytochrome c oxidase (complex IV, CIV), that cooperate to transfer electrons derived from NADH and succinate to molecular oxygen, creating an electrochemical gradient over the inner membrane that drives transmembrane transport and the ATP synthase. Cytochrome c oxidase is the component of the respiratory chain that catalyzes the reduction of oxygen to water. Electrons originating from reduced cytochrome c in the intermembrane space (IMS) are transferred via the dinuclear copper A center (CU(A)) of subunit 2 and heme A of subunit 1 to the active site in subunit 1, a binuclear center (BNC) formed by heme A3 and copper B (CU(B)). The BNC reduces molecular oxygen to 2 water molecules unsing 4 electrons from cytochrome c in the IMS and 4 protons from the mitochondrial matrix. The polypeptide is Cytochrome c oxidase subunit 6A1, mitochondrial (COX6A1) (Ovis aries (Sheep)).